Reading from the N-terminus, the 138-residue chain is Large ribosomal subunit protein uL16 (138 aa).

This sequence belongs to the universal ribosomal protein uL16 family. Part of the 50S ribosomal subunit.

In terms of biological role, binds 23S rRNA and is also seen to make contacts with the A and possibly P site tRNAs. The protein is Large ribosomal subunit protein uL16 of Chlamydia caviae (strain ATCC VR-813 / DSM 19441 / 03DC25 / GPIC) (Chlamydophila caviae).